Here is a 906-residue protein sequence, read N- to C-terminus: Protein translocase subunit SecA (906 aa).

ATP is bound by residues Q86, 104–108 (GEGKT), and D511. 2 stretches are compositionally biased toward basic and acidic residues: residues 853-865 (HESV…RHDE) and 877-888 (VRREGPKVKRND). The interval 853 to 906 (HESVIDNNQRHDEDEQEETPKVQQVRREGPKVKRNDPCPCGSGKKYKQCHGKVE) is disordered. C890, C892, C901, and H902 together coordinate Zn(2+). Residues 896-906 (KKYKQCHGKVE) are compositionally biased toward basic residues.

This sequence belongs to the SecA family. Monomer and homodimer. Part of the essential Sec protein translocation apparatus which comprises SecA, SecYEG and auxiliary proteins SecDF-YajC and YidC. It depends on Zn(2+) as a cofactor.

Its subcellular location is the cell inner membrane. The protein localises to the cytoplasm. The catalysed reaction is ATP + H2O + cellular proteinSide 1 = ADP + phosphate + cellular proteinSide 2.. Its function is as follows. Part of the Sec protein translocase complex. Interacts with the SecYEG preprotein conducting channel. Has a central role in coupling the hydrolysis of ATP to the transfer of proteins into and across the cell membrane, serving both as a receptor for the preprotein-SecB complex and as an ATP-driven molecular motor driving the stepwise translocation of polypeptide chains across the membrane. This Francisella tularensis subsp. novicida (strain U112) protein is Protein translocase subunit SecA.